Reading from the N-terminus, the 269-residue chain is NAD kinase (269 aa).

Asp-45 functions as the Proton acceptor in the catalytic mechanism. NAD(+) contacts are provided by residues 45-46 (DG), 122-123 (NE), Arg-149, Asp-151, and Ala-186.

The protein belongs to the NAD kinase family. The cofactor is a divalent metal cation.

The protein resides in the cytoplasm. The enzyme catalyses NAD(+) + ATP = ADP + NADP(+) + H(+). Functionally, involved in the regulation of the intracellular balance of NAD and NADP, and is a key enzyme in the biosynthesis of NADP. Catalyzes specifically the phosphorylation on 2'-hydroxyl of the adenosine moiety of NAD to yield NADP. The polypeptide is NAD kinase (Staphylococcus haemolyticus (strain JCSC1435)).